Here is a 730-residue protein sequence, read N- to C-terminus: Tubulin polyglutamylase ttll-5 (730 aa).

Residues arginine 120 to serine 478 enclose the TTL domain. Residues serine 278–leucine 281, lysine 291, and aspartate 293 contribute to the ATP site. A disordered region spans residues lysine 594–serine 618. The segment covering serine 600–serine 618 has biased composition (low complexity).

The protein belongs to the tubulin--tyrosine ligase family. In terms of tissue distribution, expressed in body wall muscles. Not expressed in sensory neurons.

The catalysed reaction is L-glutamyl-[protein] + L-glutamate + ATP = gamma-L-glutamyl-L-glutamyl-[protein] + ADP + phosphate + H(+). Functionally, polyglutamylase which preferentially modifies alpha-tubulin. Involved in the side-chain initiation step of the polyglutamylation reaction rather than in the elongation step. Together with ttll-4 and ttll-11, required for male mating. Probably by regulating microtubule stability via the glutamylation of tubulin, negatively regulates axon regrowth after injury in PLM neurons. The chain is Tubulin polyglutamylase ttll-5 from Caenorhabditis elegans.